The primary structure comprises 3573 residues: Zinc finger homeobox protein 4 (3573 aa).

Positions 1-28 are enriched in polar residues; it reads METCDSPTISRQENGQSTSKLCGTTQLD. Disordered regions lie at residues 1–54, 425–479, and 522–606; these read METC…LRTD, LSHS…DTYS, and TSSS…GSPG. Basic and acidic residues-rich tracts occupy residues 39–54 and 434–452; these read EPDRENSSTDDNLRTD and KLSESKDQENNCERQKETN. Over residues 468-479 the composition is skewed to acidic residues; it reads EPVEEEDEDTYS. The segment covering 585–599 has biased composition (polar residues); it reads SVTPHQHSFTPSTPS. 3 C2H2-type zinc fingers span residues 609 to 632, 640 to 663, and 695 to 719; these read IECPKCDTVLGSSRSLGGHMTMMH, LKCPKCNWHYKYQQTLEAHMKEKH, and FRCEVCNYSTTTKGNLSIHMQSDKH. The segment at 763–785 adopts a C2H2-type 4; degenerate zinc-finger fold; sequence WRCEVCDYETNVARNLRIHMTSE. 3 consecutive C2H2-type zinc fingers follow at residues 913–937, 969–991, and 1017–1041; these read YQCKLCNYNTQLKANFQLHCKTDKH, LKCNACDYYTNSVDKLRLHTTNH, and YYCALCDYSTKVKLNLVQHVRSVKH. The segment at 1096 to 1132 is disordered; that stretch reads GEDTEGSAKSTSVAIGDDKDSSERDNTEAKKSSKDSV. A compositionally biased stretch (basic and acidic residues) spans 1111 to 1129; that stretch reads GDDKDSSERDNTEAKKSSK. 2 C2H2-type zinc fingers span residues 1168-1191 and 1197-1220; these read YQCPYCNYNSRDPNRIQMHVLSQH and ICCPLCQDVLSNKMHLQLHLTHLH. Residues 1250 to 1340 are disordered; it reads AASEKSERDT…EQQKKQQLSV (91 aa). Residues 1277–1306 are compositionally biased toward basic and acidic residues; sequence VDEKSTPGTDESKPGMEIKSEEQKPPKESA. The span at 1322-1340 shows a compositional bias: polar residues; the sequence is TDSMPDQLNEQQKKQQLSV. 2 consecutive C2H2-type zinc fingers follow at residues 1348 to 1370 and 1376 to 1399; these read YRCNHCSLAFKTMQKLQIHSQYH and TMCSLCQRSFRTFQALKKHLEAGH. A disordered region spans residues 1442-1476; the sequence is YEMEQEGKASPVGSDSSSIPDDMGSEPKRTLPFRK. 2 C2H2-type zinc fingers span residues 1492–1518 and 1544–1568; these read YKCTVCKESFTQKNILLVHYNSVSHLH and YKCSICNVAYSQSSTLEIHMRSVLH. Disordered regions lie at residues 1577-1596 and 1795-1843; these read LEPSGNISSGNSVAGNVNSP and YKES…IASG. Positions 1580–1596 are enriched in low complexity; sequence SGNISSGNSVAGNVNSP. Over residues 1795 to 1830 the composition is skewed to basic and acidic residues; the sequence is YKESEEISEKQEKPKQEFTNESEGLKENKDMKKPKS. Residues 1886 to 1909 form a C2H2-type 14 zinc finger; sequence LECGTCSKLFSNILILKSHQEHVH. Residues 1933–2013 form a disordered region; it reads YPISPSSPET…PSAPPQVQLP (81 aa). 2 stretches are compositionally biased toward pro residues: residues 1940-1962 and 1980-2007; these read PETPPPPPPPPPPPPPPPPPTPS and LQAPPPTPPPPPPPPPPPPPPPPPPSAP. DNA-binding regions (homeobox) lie at residues 2072-2131 and 2169-2228; these read FKRP…RQRN and KRSS…RKSY. The segment at 2255–2279 adopts a C2H2-type 15; degenerate zinc-finger fold; that stretch reads YQCKKCSVVFPRIFDLITHQKKQCY. Disordered regions lie at residues 2278–2300 and 2318–2426; these read CYKDEDDDAQDESQTEDSMDASD and SLAV…TPLQ. Residues 2281–2297 show a composition bias toward acidic residues; sequence DEDDDAQDESQTEDSMD. Residues 2318 to 2334 are compositionally biased toward low complexity; it reads SLAVTAASSGSGSSTPL. Positions 2340 to 2357 are enriched in basic and acidic residues; sequence PEPEKASPKSESTEKPKP. 2 stretches are compositionally biased toward low complexity: residues 2360–2373 and 2382–2413; these read TISKQTDTTSQSSK and PSDPQPSASQPQQQKQSQIIGRPPSTSQTTPV. The C2H2-type 16 zinc-finger motif lies at 2436–2458; that stretch reads YQCDQCTVAFPTLELWQEHQHMH. Positions 2499–2509 are enriched in polar residues; that stretch reads LAQMPPQTGSS. A disordered region spans residues 2499–2553; that stretch reads LAQMPPQTGSSHAAHPATVSGSMKRKLDDKEDNNCSEKEGGNSGEDQHRDKRLRT. Residues 2523 to 2547 are compositionally biased toward basic and acidic residues; that stretch reads RKLDDKEDNNCSEKEGGNSGEDQHR. The homeobox 3 DNA-binding region spans 2548 to 2607; sequence DKRLRTTITPEQLEILYEKYLLDSNPTRKMLDHIAREVGLKKRVVQVWFQNTRARERKGQ. The segment at 2618-2641 adopts a C2H2-type 17 zinc-finger fold; sequence KRCPFCRALFKAKSALESHIRSRH. Disordered regions lie at residues 2704–2788 and 2820–2875; these read EMSP…PKPL and FSEK…PGHK. Polar residues-rich tracts occupy residues 2709–2718 and 2746–2773; these read NLLSPSSFKA and TSSINTAISDATTGDEGNNEMESTTGSS. Over residues 2820–2829 the composition is skewed to basic and acidic residues; the sequence is FSEKDGDHDQ. Positions 2874–2933 form a DNA-binding region, homeobox 4; the sequence is HKRFRTQMSNLQLKVLKACFSDYRTPTMQECEMLGNEIGLPKRVVQVWFQNARAKEKKFK. The segment at 2952–2976 adopts a C2H2-type 18; degenerate zinc-finger fold; the sequence is PECSLCGVKYSARLSIRDHIFSKQH. Disordered regions lie at residues 3060 to 3174 and 3287 to 3343; these read PSSL…KHLK and LQKQ…LDSK. Positions 3084 to 3104 are enriched in low complexity; sequence PTSATSSPALSLSSAPSKPLL. Residues 3105–3129 are compositionally biased toward pro residues; sequence QTPPPPPPPPPPPPPPPPPPPPPPS. The segment covering 3159–3174 has biased composition (basic and acidic residues); the sequence is IKEEELEANKPEKHLK. Residues 3271–3316 are a coiled coil; sequence ALLQQYQQYQQNLQDSLQKQQKQQQEQQQKQVQAKSSKAENDQQQN. Low complexity predominate over residues 3287–3305; sequence LQKQQKQQQEQQQKQVQAK. Residues 3321–3343 are compositionally biased toward basic and acidic residues; it reads SETKEDRSSATESTKEEPQLDSK. The C2H2-type 19; degenerate zinc-finger motif lies at 3360 to 3384; sequence FICRKCQMMFTDEDAAVNHQKSFCY. The C2H2-type 20 zinc finger occupies 3404–3428; sequence YQCLACDVAISGNEALSQHLQSSLH. 2 disordered regions span residues 3449 to 3468 and 3518 to 3543; these read HSVCSPNPNTTSTSQSAASS and TSGVQTSLPTESCSDESDSELSQKLE. The segment covering 3453–3468 has biased composition (low complexity); the sequence is SPNPNTTSTSQSAASS.

The protein belongs to the krueppel C2H2-type zinc-finger protein family.

The protein localises to the nucleus. In terms of biological role, may play a role in neural and muscle differentiation. May be involved in transcriptional regulation. This is Zinc finger homeobox protein 4 (ZFHX4) from Gallus gallus (Chicken).